Consider the following 414-residue polypeptide: Serine/threonine transporter SstT (414 aa).

The Cytoplasmic segment spans residues Thr2 to His15. Residues Gly16–Ser36 form a helical membrane-spanning segment. Topologically, residues Lys37–Leu45 are periplasmic. Residues Leu46–Val66 form a helical membrane-spanning segment. The Cytoplasmic portion of the chain corresponds to Met67 to Pro83. Residues Ile84–Phe104 form a helical membrane-spanning segment. Residues Ala105 to Asp142 lie on the Periplasmic side of the membrane. Residues Ala143 to Leu163 form a helical membrane-spanning segment. At Arg164–Asn179 the chain is on the cytoplasmic side. The chain crosses the membrane as a helical span at residues Ala180–Val200. Topologically, residues Ser201–Gln217 are periplasmic. Residues Leu218 to Val238 traverse the membrane as a helical segment. The Cytoplasmic segment spans residues Trp239–Asn299. A helical membrane pass occupies residues Met300–Ile320. Residues Pro321 to Ser331 are Periplasmic-facing. A helical transmembrane segment spans residues Val332–Ile352. At Pro353–Asn414 the chain is on the cytoplasmic side.

Belongs to the dicarboxylate/amino acid:cation symporter (DAACS) (TC 2.A.23) family.

The protein localises to the cell inner membrane. It carries out the reaction L-serine(in) + Na(+)(in) = L-serine(out) + Na(+)(out). It catalyses the reaction L-threonine(in) + Na(+)(in) = L-threonine(out) + Na(+)(out). Functionally, involved in the import of serine and threonine into the cell, with the concomitant import of sodium (symport system). This Shigella flexneri protein is Serine/threonine transporter SstT.